Here is an 89-residue protein sequence, read N- to C-terminus: Dynein light chain 1, cytoplasmic (89 aa).

K36 carries the N6-acetyllysine modification. A Glycyl lysine isopeptide (Lys-Gly) (interchain with G-Cter in SUMO2) cross-link involves residue K43. The segment at T67 to G89 is interaction with ESR1. Residue S88 is modified to Phosphoserine.

This sequence belongs to the dynein light chain family. Homodimer. Monomer; the monomeric form is incapable of binding to target proteins. The cytoplasmic dynein 1 complex consists of two catalytic heavy chains (HCs) and a number of non-catalytic subunits presented by intermediate chains (ICs), light intermediate chains (LICs) and light chains (LCs); the composition seems to vary in respect to the IC, LIC and LC composition. The heavy chain homodimer serves as a scaffold for the probable homodimeric assembly of the respective non-catalytic subunits. The ICs and LICs bind directly to the HC dimer and the LCs assemble on the IC dimer. Interacts with TXNDC17. Interacts with WWC1 and ESR1. The WWC1-DYNLL1 interaction is mandatory for the recruitment and transactivation functions of ESR1 or DYNLL1 to the target chromatin. Interacts with BCL2L11. Interacts with BCL2; the interaction is greatly enhanced in the nucleus and in mitochondria upon induction of apoptosis. Interacts with PAK1; the interaction requires dimeric DYNLL1. Interacts with MYZAP. Part of an astrin (SPAG5)-kinastrin (SKAP) complex containing KNSTRN, SPAG5, PLK1, DYNLL1 and SGO2. Interacts with ATMIN; this interaction inhibits ATMIN transcriptional activity and hence may play a role in a feedback loop whereby DYNLL1 inhibits transactivation of its own promoter by ATMIN. Interacts with NEK9 (not phosphorylated at 'Ser-944'). Interacts with BICD2. Interacts with BCAS1. Interacts with Basson/BSN. Interacts with HDAC6. Interacts with TPPP. Interacts with AMBRA1 (via TQT motifs); tethering AMBRA1 to the cytoskeleton. Interacts with FAM83D/CHICA (via C-terminus). Interacts with HMMR, SPAG5/Astrin and KNSTRN/Kinastrin. Interacts with TLK2. Interacts with NOS1. Interacts with WWC1, WWC2 and WWC3. Interacts with MRE11; inhibiting MRE11 homodimerization and activity. In terms of assembly, (Microbial infection) Interacts with bovine immunodeficiency virus Gag protein; this interaction is critical for intracellular microtubule-dependent viral genome transport. Phosphorylation at Ser-88 promotes recruitment to DNA double-strand breaks (DSBs) by TP53BP1 and ability to inhibit MRE11.

Its subcellular location is the cytoplasm. It localises to the cytoskeleton. It is found in the microtubule organizing center. The protein resides in the centrosome. The protein localises to the chromosome. Its subcellular location is the nucleus. It localises to the mitochondrion. In terms of biological role, acts as one of several non-catalytic accessory components of the cytoplasmic dynein 1 complex that are thought to be involved in linking dynein to cargos and to adapter proteins that regulate dynein function. Cytoplasmic dynein 1 acts as a motor for the intracellular retrograde motility of vesicles and organelles along microtubules. May play a role in changing or maintaining the spatial distribution of cytoskeletal structures. In addition to its role in cytoskeleton and transport, acts as a protein-protein adapter, which inhibits and/or sequesters target proteins. Involved in the response to DNA damage by acting as a key regulator of DNA end resection: when phosphorylated at Ser-88, recruited to DNA double-strand breaks (DSBs) by TP53BP1 and acts by disrupting MRE11 dimerization, thereby inhibiting DNA end resection. In a subset of DSBs, DYNLL1 remains unphosphorylated and promotes the recruitment of the Shieldin complex. Binds and inhibits the catalytic activity of neuronal nitric oxide synthase/NOS1. Promotes transactivation functions of ESR1 and plays a role in the nuclear localization of ESR1. Regulates apoptotic activities of BCL2L11 by sequestering it to microtubules. Upon apoptotic stimuli the BCL2L11-DYNLL1 complex dissociates from cytoplasmic dynein and translocates to mitochondria and sequesters BCL2 thus neutralizing its antiapoptotic activity. The protein is Dynein light chain 1, cytoplasmic (DYNLL1) of Bos taurus (Bovine).